Reading from the N-terminus, the 151-residue chain is MKVVLLKDVAKIGKKGEVKNVSDGYARNFLIPKGLALEATPAVMKQLKAQKMKEEEEKKKIKQESEELLKLLQKHLYKIPVKTGGSGKLFGALTNADIAKAISEKTGKDIDKKHIVLNKPIKELGLYEITVKLPEGITGKIKVEVVQEGKN.

This sequence belongs to the bacterial ribosomal protein bL9 family.

Functionally, binds to the 23S rRNA. This chain is Large ribosomal subunit protein bL9, found in Thermosipho africanus (strain TCF52B).